A 235-amino-acid polypeptide reads, in one-letter code: Small ribosomal subunit protein uS3 (235 aa).

In terms of domain architecture, KH type-2 spans 39-107 (VRKFLNKELA…PAQINIAEVK (69 aa)).

Belongs to the universal ribosomal protein uS3 family. As to quaternary structure, part of the 30S ribosomal subunit. Forms a tight complex with proteins S10 and S14.

In terms of biological role, binds the lower part of the 30S subunit head. Binds mRNA in the 70S ribosome, positioning it for translation. The polypeptide is Small ribosomal subunit protein uS3 (Actinobacillus pleuropneumoniae serotype 5b (strain L20)).